Reading from the N-terminus, the 230-residue chain is Heptaprenylglyceryl phosphate synthase (230 aa).

Sn-glycerol 1-phosphate is bound at residue lysine 12. Mg(2+) is bound by residues aspartate 14 and threonine 40. Sn-glycerol 1-phosphate-binding positions include 159–164 (YIEYSG), glycine 189, and 209–210 (GD).

The protein belongs to the GGGP/HepGP synthase family. Group I subfamily. In terms of assembly, homodimer. Requires Mg(2+) as cofactor.

The enzyme catalyses sn-glycerol 1-phosphate + all-trans-heptaprenyl diphosphate = 3-heptaprenyl-sn-glycero-1-phosphate + diphosphate. It participates in membrane lipid metabolism; glycerophospholipid metabolism. Functionally, prenyltransferase that catalyzes in vivo the transfer of the heptaprenyl moiety of heptaprenyl pyrophosphate (HepPP; 35 carbon atoms) to the C3 hydroxyl of sn-glycerol-1-phosphate (G1P), producing heptaprenylglyceryl phosphate (HepGP). This reaction is an ether-bond-formation step in the biosynthesis of archaea-type G1P-based membrane lipids found in Bacillales. The chain is Heptaprenylglyceryl phosphate synthase from Staphylococcus aureus (strain bovine RF122 / ET3-1).